The chain runs to 328 residues: 3-dehydroquinate synthase (328 aa).

The protein belongs to the archaeal-type DHQ synthase family.

The enzyme catalyses 2-amino-2,3,7-trideoxy-D-lyxo-hept-6-ulosonate + NAD(+) + H2O = 3-dehydroquinate + NH4(+) + NADH + H(+). In terms of biological role, catalyzes the oxidative deamination and cyclization of 2-amino-3,7-dideoxy-D-threo-hept-6-ulosonic acid (ADH) to yield 3-dehydroquinate (DHQ), which is fed into the canonical shikimic pathway of aromatic amino acid biosynthesis. The chain is 3-dehydroquinate synthase from Methanosphaerula palustris (strain ATCC BAA-1556 / DSM 19958 / E1-9c).